A 153-amino-acid chain; its full sequence is UPF0735 ACT domain-containing protein FN1487 (153 aa).

An ACT domain is found at 76 to 152 (SLHLSLKDRV…GIADIRITGS (77 aa)).

Belongs to the UPF0735 family.

The protein is UPF0735 ACT domain-containing protein FN1487 of Fusobacterium nucleatum subsp. nucleatum (strain ATCC 25586 / DSM 15643 / BCRC 10681 / CIP 101130 / JCM 8532 / KCTC 2640 / LMG 13131 / VPI 4355).